Consider the following 247-residue polypeptide: 3-deoxy-manno-octulosonate cytidylyltransferase (247 aa).

It belongs to the KdsB family.

It localises to the cytoplasm. The enzyme catalyses 3-deoxy-alpha-D-manno-oct-2-ulosonate + CTP = CMP-3-deoxy-beta-D-manno-octulosonate + diphosphate. Its pathway is nucleotide-sugar biosynthesis; CMP-3-deoxy-D-manno-octulosonate biosynthesis; CMP-3-deoxy-D-manno-octulosonate from 3-deoxy-D-manno-octulosonate and CTP: step 1/1. The protein operates within bacterial outer membrane biogenesis; lipopolysaccharide biosynthesis. In terms of biological role, activates KDO (a required 8-carbon sugar) for incorporation into bacterial lipopolysaccharide in Gram-negative bacteria. In Leptospira interrogans serogroup Icterohaemorrhagiae serovar Lai (strain 56601), this protein is 3-deoxy-manno-octulosonate cytidylyltransferase.